A 381-amino-acid polypeptide reads, in one-letter code: UDP-N-acetylglucosamine--N-acetylmuramyl-(pentapeptide) pyrophosphoryl-undecaprenol N-acetylglucosamine transferase (381 aa).

Residues 10 to 12 (TGG), Asn-124, Arg-165, Ser-207, Ile-263, and Gln-308 each bind UDP-N-acetyl-alpha-D-glucosamine.

It belongs to the glycosyltransferase 28 family. MurG subfamily.

The protein localises to the cell inner membrane. It carries out the reaction di-trans,octa-cis-undecaprenyl diphospho-N-acetyl-alpha-D-muramoyl-L-alanyl-D-glutamyl-meso-2,6-diaminopimeloyl-D-alanyl-D-alanine + UDP-N-acetyl-alpha-D-glucosamine = di-trans,octa-cis-undecaprenyl diphospho-[N-acetyl-alpha-D-glucosaminyl-(1-&gt;4)]-N-acetyl-alpha-D-muramoyl-L-alanyl-D-glutamyl-meso-2,6-diaminopimeloyl-D-alanyl-D-alanine + UDP + H(+). It participates in cell wall biogenesis; peptidoglycan biosynthesis. Cell wall formation. Catalyzes the transfer of a GlcNAc subunit on undecaprenyl-pyrophosphoryl-MurNAc-pentapeptide (lipid intermediate I) to form undecaprenyl-pyrophosphoryl-MurNAc-(pentapeptide)GlcNAc (lipid intermediate II). The chain is UDP-N-acetylglucosamine--N-acetylmuramyl-(pentapeptide) pyrophosphoryl-undecaprenol N-acetylglucosamine transferase from Trichlorobacter lovleyi (strain ATCC BAA-1151 / DSM 17278 / SZ) (Geobacter lovleyi).